Here is a 93-residue protein sequence, read N- to C-terminus: AVLDGDVRKCLPCGPRNRGRCFGPRICCGEELGCYLGTPETLRCQEESFLPTPCESGRKPCGGDGASCAAPGICCSSEGCVADPACEREALFA.

Disulfide bonds link Cys-10–Cys-54, Cys-13–Cys-27, Cys-21–Cys-44, Cys-28–Cys-34, Cys-61–Cys-74, Cys-68–Cys-86, and Cys-75–Cys-80.

The protein belongs to the vasopressin/oxytocin family.

The protein resides in the secreted. In terms of biological role, neurophysin 1 specifically binds oxytocin. In Anser anser anser (Western greylag goose), this protein is Neurophysin 1.